We begin with the raw amino-acid sequence, 555 residues long: MSNSNKLIAEKNGSRYGRMIHPWLRKKQDMLADTPSRREGMTYEEELSKRQQGGVFIFDIAMQLTHGKGEHGLSGVAATLFNRFFNVHSLKRCDFRDVAAACVFLAGKNEDAPKKLKYVVTQLWQFKYPHNKQFQSEQHFLDQCNVVTLIEDVLLKTISFDINVDLPHQYVLKLMRDVEKGRNVYKDMVKTAYYMATDVLIITDWSVRYSCASIATACVNIAAFFHNINMDDIVPFELSDRWYRLEDQSMTREEVEAMTKEFLDIFSRNPQFHIGSLKKIDPLGKVKIVGMPPQVSSTVTPSGSSSNLKKIDLESYKGRPKPLSNSSDSPSTRPSFLPDVKNQKVVEQELMEQRMKEAAQQKIHRNGHRPSSSSHPLHHHSTSSSASNNSNHQNRSSSGLSAHQHQKPYNEDSRSAKRSMMYEETNSSKKPRIDYKMSFVASSSTTIATMHNDHFSQTTHQQNISTYARGVNEMMLNQVAPPPLMSVSAQPSTYQKMCMEYQRNPADSRHTMSSTQQISPPDEPSPPVSQILLPPPPPPPILPPRLDEMEEGELV.

Disordered stretches follow at residues 315-429 (SYKG…NSSK) and 505-555 (PADS…GELV). Over residues 321–335 (KPLSNSSDSPSTRPS) the composition is skewed to low complexity. Positions 341–359 (KNQKVVEQELMEQRMKEAA) are enriched in basic and acidic residues. Over residues 382–398 (TSSSASNNSNHQNRSSS) the composition is skewed to low complexity. Over residues 521–543 (PDEPSPPVSQILLPPPPPPPILP) the composition is skewed to pro residues.

Belongs to the cyclin family. Cyclin C subfamily.

Regulatory subunit of the cyclin-dependent kinase pair (CDK9/cyclin T) complex, also called positive transcription elongation factor B (P-TEFb), which is proposed to facilitate the transition from abortive to production elongation by phosphorylating the CTD (carboxy-terminal domain) of the large subunit of RNA polymerase II (RNAP II). The protein is Cyclin-T1.2 (cit-1.2) of Caenorhabditis elegans.